The sequence spans 229 residues: Enolase-phosphatase E1 (229 aa).

Belongs to the HAD-like hydrolase superfamily. MasA/MtnC family. In terms of assembly, monomer. The cofactor is Mg(2+).

It catalyses the reaction 5-methylsulfanyl-2,3-dioxopentyl phosphate + H2O = 1,2-dihydroxy-5-(methylsulfanyl)pent-1-en-3-one + phosphate. Its pathway is amino-acid biosynthesis; L-methionine biosynthesis via salvage pathway; L-methionine from S-methyl-5-thio-alpha-D-ribose 1-phosphate: step 3/6. The protein operates within amino-acid biosynthesis; L-methionine biosynthesis via salvage pathway; L-methionine from S-methyl-5-thio-alpha-D-ribose 1-phosphate: step 4/6. Functionally, bifunctional enzyme that catalyzes the enolization of 2,3-diketo-5-methylthiopentyl-1-phosphate (DK-MTP-1-P) into the intermediate 2-hydroxy-3-keto-5-methylthiopentenyl-1-phosphate (HK-MTPenyl-1-P), which is then dephosphorylated to form the acireductone 1,2-dihydroxy-3-keto-5-methylthiopentene (DHK-MTPene). The protein is Enolase-phosphatase E1 of Erwinia tasmaniensis (strain DSM 17950 / CFBP 7177 / CIP 109463 / NCPPB 4357 / Et1/99).